We begin with the raw amino-acid sequence, 602 residues long: Glutaminase liver isoform, mitochondrial (602 aa).

Residues 1-14 (MRSMRALQNALSRA) constitute a mitochondrion transit peptide. 2 disordered regions span residues 1–28 (MRSM…HPSR) and 46–67 (QGRG…SNSG). A substrate-binding site is contributed by Ser219. At Lys253 the chain carries N6-succinyllysine. A substrate-binding site is contributed by Asn268. N6-acetyllysine occurs at positions 279 and 284. Substrate contacts are provided by Glu314 and Asn321. Lys329 bears the N6-acetyllysine mark. 3 residues coordinate substrate: Tyr347, Tyr399, and Val417. ANK repeat units follow at residues 518-551 (DSRT…VKDR) and 552-585 (WGNI…SETQ).

The protein belongs to the glutaminase family. As to quaternary structure, homotetramer, dimer of dimers. Does not assemble into higher oligomers. Interacts with the PDZ domain of the syntrophin SNTA1. Interacts with the PDZ domain of TAX1BP3. In terms of tissue distribution, liver specific.

The protein resides in the mitochondrion. The catalysed reaction is L-glutamine + H2O = L-glutamate + NH4(+). Functionally, plays an important role in the regulation of glutamine catabolism. Promotes mitochondrial respiration and increases ATP generation in cells by catalyzing the synthesis of glutamate and alpha-ketoglutarate. Increases cellular anti-oxidant function via NADH and glutathione production. May play a role in preventing tumor proliferation. The sequence is that of Glutaminase liver isoform, mitochondrial (Gls2) from Rattus norvegicus (Rat).